The chain runs to 141 residues: Lutropin subunit beta (141 aa).

A signal peptide spans 1 to 22 (MERYQELTVLLLLLLLEGGSWG). Disulfide bonds link Cys-30/Cys-78, Cys-44/Cys-93, Cys-47/Cys-131, Cys-55/Cys-109, Cys-59/Cys-111, and Cys-114/Cys-121. The N-linked (GlcNAc...) asparagine glycan is linked to Asn-34.

Belongs to the glycoprotein hormones subunit beta family. As to quaternary structure, heterodimer of a common alpha chain and a unique beta chain which confers biological specificity to thyrotropin, lutropin, follitropin and gonadotropin.

The protein localises to the secreted. In terms of biological role, promotes spermatogenesis and ovulation by stimulating the testes and ovaries to synthesize steroids. This is Lutropin subunit beta (LHB) from Trichosurus vulpecula (Brush-tailed possum).